A 341-amino-acid polypeptide reads, in one-letter code: UDP-N-acetylenolpyruvoylglucosamine reductase (341 aa).

One can recognise an FAD-binding PCMH-type domain in the interval 15–185; sequence VTQSCLSLIE…TAVGLRLPKT (171 aa). The active site involves R161. S231 (proton donor) is an active-site residue. The active site involves E327.

The protein belongs to the MurB family. FAD serves as cofactor.

It localises to the cytoplasm. The catalysed reaction is UDP-N-acetyl-alpha-D-muramate + NADP(+) = UDP-N-acetyl-3-O-(1-carboxyvinyl)-alpha-D-glucosamine + NADPH + H(+). It participates in cell wall biogenesis; peptidoglycan biosynthesis. Its function is as follows. Cell wall formation. This chain is UDP-N-acetylenolpyruvoylglucosamine reductase, found in Shewanella oneidensis (strain ATCC 700550 / JCM 31522 / CIP 106686 / LMG 19005 / NCIMB 14063 / MR-1).